The following is a 387-amino-acid chain: tRNA N6-adenosine threonylcarbamoyltransferase (387 aa).

Residues His-112 and His-116 each coordinate Fe cation. Substrate contacts are provided by residues 134 to 138, Asp-167, Gly-180, and Asn-325; that span reads LASGG. Residue Asp-353 coordinates Fe cation.

This sequence belongs to the KAE1 / TsaD family. It depends on Fe(2+) as a cofactor.

Its subcellular location is the cytoplasm. The enzyme catalyses L-threonylcarbamoyladenylate + adenosine(37) in tRNA = N(6)-L-threonylcarbamoyladenosine(37) in tRNA + AMP + H(+). In terms of biological role, required for the formation of a threonylcarbamoyl group on adenosine at position 37 (t(6)A37) in tRNAs that read codons beginning with adenine. Is involved in the transfer of the threonylcarbamoyl moiety of threonylcarbamoyl-AMP (TC-AMP) to the N6 group of A37, together with TsaE and TsaB. TsaD likely plays a direct catalytic role in this reaction. The chain is tRNA N6-adenosine threonylcarbamoyltransferase from Rickettsia typhi (strain ATCC VR-144 / Wilmington).